Consider the following 413-residue polypeptide: Multifunctional CCA protein (413 aa).

Residues G8 and R11 each coordinate ATP. The CTP site is built by G8 and R11. 2 residues coordinate Mg(2+): D21 and D23. R91, R137, and R140 together coordinate ATP. CTP contacts are provided by R91, R137, and R140. Residues 228–329 (TGIHTLMVLA…IKIFDKADLW (102 aa)) form the HD domain.

It belongs to the tRNA nucleotidyltransferase/poly(A) polymerase family. Bacterial CCA-adding enzyme type 1 subfamily. In terms of assembly, monomer. Can also form homodimers and oligomers. The cofactor is Mg(2+). It depends on Ni(2+) as a cofactor.

It catalyses the reaction a tRNA precursor + 2 CTP + ATP = a tRNA with a 3' CCA end + 3 diphosphate. The catalysed reaction is a tRNA with a 3' CCA end + 2 CTP + ATP = a tRNA with a 3' CCACCA end + 3 diphosphate. Catalyzes the addition and repair of the essential 3'-terminal CCA sequence in tRNAs without using a nucleic acid template. Adds these three nucleotides in the order of C, C, and A to the tRNA nucleotide-73, using CTP and ATP as substrates and producing inorganic pyrophosphate. tRNA 3'-terminal CCA addition is required both for tRNA processing and repair. Also involved in tRNA surveillance by mediating tandem CCA addition to generate a CCACCA at the 3' terminus of unstable tRNAs. While stable tRNAs receive only 3'-terminal CCA, unstable tRNAs are marked with CCACCA and rapidly degraded. The chain is Multifunctional CCA protein from Shewanella woodyi (strain ATCC 51908 / MS32).